The sequence spans 183 residues: Protein Dr1 (183 aa).

The 64-residue stretch at 19–82 folds into the Histone-fold domain; it reads TLPRASINKI…INAEHVLEAL (64 aa). Residues 92–183 form a repression of TATA-containing promoters region; it reads QEAEAVLHDC…DDDDDDDDDY (92 aa). Residues 155–183 form a disordered region; that stretch reads AMVQRPPLADGSVASKPSEDDDDDDDDDY. The span at 173–183 shows a compositional bias: acidic residues; that stretch reads EDDDDDDDDDY.

Belongs to the NC2 beta/DR1 family. In terms of assembly, component of the Ada2a-containing (ATAC) complex composed of at least Ada2a, Atac1, Hcf, Ada3, Gcn5, Mocs2B, Charac-14, Atac3, Atac2, NC2beta and wds. Homodimer. Interacts with NC2-alpha/Drap1 to form the dNC2 complex.

The protein resides in the nucleus. Bifunctional basic transcription factor. Activates transcription of DPE (Downstream Promoter Element) containing promoters while repressing transcription of promoters which contain TATA elements. Together with Chrac-14, promotes nucleosome sliding of ATP-dependent nucleosome remodeling complexes. The sequence is that of Protein Dr1 (NC2beta) from Drosophila melanogaster (Fruit fly).